The sequence spans 204 residues: ATP-dependent Clp protease proteolytic subunit (204 aa).

Serine 101 functions as the Nucleophile in the catalytic mechanism. Residue histidine 126 is part of the active site.

The protein belongs to the peptidase S14 family. In terms of assembly, component of the chloroplastic Clp protease core complex.

It is found in the plastid. The protein localises to the chloroplast stroma. It catalyses the reaction Hydrolysis of proteins to small peptides in the presence of ATP and magnesium. alpha-casein is the usual test substrate. In the absence of ATP, only oligopeptides shorter than five residues are hydrolyzed (such as succinyl-Leu-Tyr-|-NHMec, and Leu-Tyr-Leu-|-Tyr-Trp, in which cleavage of the -Tyr-|-Leu- and -Tyr-|-Trp bonds also occurs).. Functionally, cleaves peptides in various proteins in a process that requires ATP hydrolysis. Has a chymotrypsin-like activity. Plays a major role in the degradation of misfolded proteins. The sequence is that of ATP-dependent Clp protease proteolytic subunit from Phalaenopsis aphrodite subsp. formosana (Moth orchid).